The following is a 62-amino-acid chain: Photosystem II reaction center protein Z (62 aa).

The next 2 helical transmembrane spans lie at 8-28 (ALFA…VAFA) and 41-61 (FQGV…NSLV).

This sequence belongs to the PsbZ family. In terms of assembly, PSII is composed of 1 copy each of membrane proteins PsbA, PsbB, PsbC, PsbD, PsbE, PsbF, PsbH, PsbI, PsbJ, PsbK, PsbL, PsbM, PsbT, PsbY, PsbZ, Psb30/Ycf12, at least 3 peripheral proteins of the oxygen-evolving complex and a large number of cofactors. It forms dimeric complexes.

It is found in the plastid. The protein resides in the chloroplast thylakoid membrane. Functionally, may control the interaction of photosystem II (PSII) cores with the light-harvesting antenna, regulates electron flow through the 2 photosystem reaction centers. PSII is a light-driven water plastoquinone oxidoreductase, using light energy to abstract electrons from H(2)O, generating a proton gradient subsequently used for ATP formation. This chain is Photosystem II reaction center protein Z, found in Nephroselmis olivacea (Green alga).